We begin with the raw amino-acid sequence, 118 residues long: Co-chaperonin GroES (118 aa).

It belongs to the GroES chaperonin family. In terms of assembly, heptamer of 7 subunits arranged in a ring. Interacts with the chaperonin GroEL.

The protein resides in the cytoplasm. Together with the chaperonin GroEL, plays an essential role in assisting protein folding. The GroEL-GroES system forms a nano-cage that allows encapsulation of the non-native substrate proteins and provides a physical environment optimized to promote and accelerate protein folding. GroES binds to the apical surface of the GroEL ring, thereby capping the opening of the GroEL channel. The sequence is that of Co-chaperonin GroES from Helicobacter pylori (strain G27).